The chain runs to 117 residues: ATP-dependent Clp protease adapter protein ClpS 1 (117 aa).

The disordered stretch occupies residues 1–33; it reads MIAMPVRMQQGSEGDGGGPSRGTSVITRTKPKT.

This sequence belongs to the ClpS family. Binds to the N-terminal domain of the chaperone ClpA.

Its function is as follows. Involved in the modulation of the specificity of the ClpAP-mediated ATP-dependent protein degradation. The protein is ATP-dependent Clp protease adapter protein ClpS 1 of Rhizobium meliloti (strain 1021) (Ensifer meliloti).